The chain runs to 209 residues: Bcl-2 homologous antagonist/killer (209 aa).

A disordered region spans residues 1-28 (MASGQGPGPPKVGCDESPSPSEQQVAQD). At A2 the chain carries N-acetylalanine. Positions 18 to 27 (PSPSEQQVAQ) are enriched in polar residues. Residues 72–86 (VGRQLALIGDDINRR) carry the BH3 motif. Positions 115–134 (SLFKSGISWGRVVALLGFGY) match the BH1 motif. Zn(2+)-binding residues include D158 and H162. The BH2 signature appears at 167 to 182 (RWIAQRGGWVAALNFR). The helical transmembrane segment at 186-203 (ILTVMVIFGVVLLGQFVV) threads the bilayer.

Belongs to the Bcl-2 family. In terms of assembly, homodimer. Formation of the homodimer is zinc-dependent. Forms heterodimers with BCL2 and BCL2L1 isoform Bcl-X(L). Forms heterooligomers with BAX. Interacts with BCL2A1. Interacts withRTL10/BOP. Interacts with VDAC1. Interacts with GIMAP3/IAN4 and GIMAP5/IAN5. As to quaternary structure, (Microbial infection) Interacts with gamma-herpesvirus 68 protein vBCL2. Widely expressed.

Its subcellular location is the mitochondrion outer membrane. Its function is as follows. In the presence of an appropriate stimulus, accelerates programmed cell death by binding to, and antagonizing the anti-apoptotic action of BCL2. The protein is Bcl-2 homologous antagonist/killer (Bak1) of Mus musculus (Mouse).